Consider the following 336-residue polypeptide: 3-isopropylmalate dehydrogenase (336 aa).

Positions 87, 97, 121, and 211 each coordinate substrate. Mg(2+) contacts are provided by Asp-211, Asp-235, and Asp-239. 271 to 283 (GSAPDIAGQGVAD) provides a ligand contact to NAD(+).

It belongs to the isocitrate and isopropylmalate dehydrogenases family. LeuB type 2 subfamily. As to quaternary structure, homodimer. It depends on Mg(2+) as a cofactor. Requires Mn(2+) as cofactor.

The protein localises to the cytoplasm. The catalysed reaction is (2R,3S)-3-isopropylmalate + NAD(+) = 4-methyl-2-oxopentanoate + CO2 + NADH. The protein operates within amino-acid biosynthesis; L-leucine biosynthesis; L-leucine from 3-methyl-2-oxobutanoate: step 3/4. Functionally, catalyzes the oxidation of 3-carboxy-2-hydroxy-4-methylpentanoate (3-isopropylmalate) to 3-carboxy-4-methyl-2-oxopentanoate. The product decarboxylates to 4-methyl-2 oxopentanoate. In Mycobacterium avium (strain 104), this protein is 3-isopropylmalate dehydrogenase.